The following is a 311-amino-acid chain: Homoserine O-acetyltransferase (311 aa).

C142 (acyl-thioester intermediate) is an active-site residue. Substrate-binding residues include K163 and S192. The active-site Proton acceptor is the H235. The active site involves E237. R249 contributes to the substrate binding site.

It belongs to the MetA family.

The protein localises to the cytoplasm. It carries out the reaction L-homoserine + acetyl-CoA = O-acetyl-L-homoserine + CoA. Its pathway is amino-acid biosynthesis; L-methionine biosynthesis via de novo pathway; O-acetyl-L-homoserine from L-homoserine: step 1/1. In terms of biological role, transfers an acetyl group from acetyl-CoA to L-homoserine, forming acetyl-L-homoserine. The sequence is that of Homoserine O-acetyltransferase from Lysinibacillus sphaericus (strain C3-41).